The primary structure comprises 265 residues: MPAASLTSVRSFVAAPVPTRPAISVEGRRAFAFKGVEKRFGDKIVLDGIDLDVPAGQFVAVIGKSGCGKSTLLRLLAGLDRPTSGSLTLGAEEEGHSRTRFMFQEPRLLPWASVVKNVEIGLTGIAAGQDARQRALDILGEVGLADRADEWPSVLSGGQKQRVALARALVGHPQILALDEPLGALDALTRIEMQQLLERIWLAQKFTAVLVTHDVAEAVTLADRVVVISAGRIALDLEVPVARPRRRGSAELARLEGTILDRLFG.

One can recognise an ABC transporter domain in the interval 31–255; it reads FAFKGVEKRF…RRGSAELARL (225 aa). An ATP-binding site is contributed by 63–70; sequence GKSGCGKS.

Belongs to the ABC transporter superfamily. Aliphatic sulfonates importer (TC 3.A.1.17.2) family. The complex is composed of two ATP-binding proteins (SsuB), two transmembrane proteins (SsuC) and a solute-binding protein (SsuA).

It localises to the cell inner membrane. It carries out the reaction ATP + H2O + aliphatic sulfonate-[sulfonate-binding protein]Side 1 = ADP + phosphate + aliphatic sulfonateSide 2 + [sulfonate-binding protein]Side 1.. Part of the ABC transporter complex SsuABC involved in aliphatic sulfonates import. Responsible for energy coupling to the transport system. This Mesorhizobium japonicum (strain LMG 29417 / CECT 9101 / MAFF 303099) (Mesorhizobium loti (strain MAFF 303099)) protein is Aliphatic sulfonates import ATP-binding protein SsuB 1.